The primary structure comprises 374 residues: UDP-N-acetylglucosamine--N-acetylmuramyl-(pentapeptide) pyrophosphoryl-undecaprenol N-acetylglucosamine transferase (374 aa).

Residues 13 to 15 (TGG), Asn124, Arg165, Ser193, and Gln294 each bind UDP-N-acetyl-alpha-D-glucosamine.

This sequence belongs to the glycosyltransferase 28 family. MurG subfamily.

It localises to the cell inner membrane. The enzyme catalyses di-trans,octa-cis-undecaprenyl diphospho-N-acetyl-alpha-D-muramoyl-L-alanyl-D-glutamyl-meso-2,6-diaminopimeloyl-D-alanyl-D-alanine + UDP-N-acetyl-alpha-D-glucosamine = di-trans,octa-cis-undecaprenyl diphospho-[N-acetyl-alpha-D-glucosaminyl-(1-&gt;4)]-N-acetyl-alpha-D-muramoyl-L-alanyl-D-glutamyl-meso-2,6-diaminopimeloyl-D-alanyl-D-alanine + UDP + H(+). Its pathway is cell wall biogenesis; peptidoglycan biosynthesis. In terms of biological role, cell wall formation. Catalyzes the transfer of a GlcNAc subunit on undecaprenyl-pyrophosphoryl-MurNAc-pentapeptide (lipid intermediate I) to form undecaprenyl-pyrophosphoryl-MurNAc-(pentapeptide)GlcNAc (lipid intermediate II). The protein is UDP-N-acetylglucosamine--N-acetylmuramyl-(pentapeptide) pyrophosphoryl-undecaprenol N-acetylglucosamine transferase of Rhizobium rhizogenes (strain K84 / ATCC BAA-868) (Agrobacterium radiobacter).